The chain runs to 280 residues: Protein IMPACT homolog (280 aa).

Residues 9-109 (DELLALESIY…QAAAERESKL (101 aa)) enclose the RWD domain.

It belongs to the IMPACT family. As to quaternary structure, interacts (via N-terminus) with gcn1 (via C-terminus); this interaction reduces the gcn1-gcn20 complex formation and prevents the interaction of gcn1 with gcn2 protein kinase and gcn2 activation in amino acid-starved cells. Interacts (via C-terminus) with act1; this interaction occurs in a gcn1-independent manner. Interacts with rpl39; this interaction occurs in a gcn1-independent manner. Associates (via middle region) with ribosomes; this association occurs in a gcn1-independent manner and persists under amino acid starvation conditions.

It localises to the cytoplasm. The protein localises to the nucleus. In terms of biological role, translational regulator that ensures constant high levels of translation under amino acid starvation. Plays a role as a negative regulator of the gcn2 kinase activity; impairs gcn1-mediated gcn2 activation, and hence gcn2-mediated eIF-2-alpha phosphorylation in amino acid-starved cells and subsequent down-regulation of protein synthesis. In normal conditions, it resides in a actin complex and has no activity. In Schizosaccharomyces pombe (strain 972 / ATCC 24843) (Fission yeast), this protein is Protein IMPACT homolog (yih1).